The sequence spans 153 residues: Actin-related protein 2/3 complex subunit 5-like protein (153 aa).

Serine 64 carries the post-translational modification Phosphoserine.

Belongs to the ARPC5 family. In terms of assembly, may be a component of the Arp2/3 complex in which it may replace ARPC5.

It localises to the cytoplasm. Its subcellular location is the cytoskeleton. In terms of biological role, may function as component of the Arp2/3 complex which is involved in regulation of actin polymerization and together with an activating nucleation-promoting factor (NPF) mediates the formation of branched actin networks. The chain is Actin-related protein 2/3 complex subunit 5-like protein (Arpc5l) from Mus musculus (Mouse).